The following is a 722-amino-acid chain: Glycine--tRNA ligase beta subunit (722 aa).

Belongs to the class-II aminoacyl-tRNA synthetase family. In terms of assembly, tetramer of two alpha and two beta subunits.

It is found in the cytoplasm. It carries out the reaction tRNA(Gly) + glycine + ATP = glycyl-tRNA(Gly) + AMP + diphosphate. This is Glycine--tRNA ligase beta subunit (glyS) from Xylella fastidiosa (strain 9a5c).